The primary structure comprises 331 residues: Geranylgeranyl pyrophosphate synthase dpmaD (331 aa).

Isopentenyl diphosphate is bound by residues Lys-53, Arg-56, and His-85. 2 residues coordinate Mg(2+): Asp-92 and Asp-96. Arg-101 contacts dimethylallyl diphosphate. Isopentenyl diphosphate is bound at residue Arg-102. Residues Lys-179, Thr-180, and Gln-213 each coordinate dimethylallyl diphosphate. Asp-216 serves as a coordination point for Mg(2+). 3 residues coordinate dimethylallyl diphosphate: Asn-220, Lys-230, and Lys-240.

This sequence belongs to the FPP/GGPP synthase family. It depends on Mg(2+) as a cofactor.

The enzyme catalyses isopentenyl diphosphate + dimethylallyl diphosphate = (2E)-geranyl diphosphate + diphosphate. It carries out the reaction isopentenyl diphosphate + (2E)-geranyl diphosphate = (2E,6E)-farnesyl diphosphate + diphosphate. The catalysed reaction is isopentenyl diphosphate + (2E,6E)-farnesyl diphosphate = (2E,6E,10E)-geranylgeranyl diphosphate + diphosphate. The protein operates within secondary metabolite biosynthesis; terpenoid biosynthesis. Geranylgeranyl pyrophosphate synthase; part of the gene cluster that mediates the biosynthesis of the diterpenoid pyrones subglutinols A and B. The first step of the pathway is the synthesis of the alpha-pyrone moiety by the polyketide synthase dpmaA via condensation of one acetyl-CoA starter unit with 3 malonyl-CoA units and 2 methylations. The alpha-pyrone is then combined with geranylgeranyl pyrophosphate (GGPP) formed by the GGPP synthase dpmaD through the action of the prenyltransferase dpmaC to yield a linear alpha-pyrone diterpenoid. Subsequent steps in the diterpenoid pyrone biosynthetic pathway involve the decalin core formation, which is initiated by the epoxidation of the C10-C11 olefin by the FAD-dependent oxidoreductase dpmaE, and is followed by a cyclization cascade catalyzed by the terpene cyclase dpmaB. The dehydrogenase dpmaF is then involved in tetrahydrofuran (THF) ring formation at the C5 unit to complete the formation of subglutinols A and B. In Metarhizium anisopliae (Entomophthora anisopliae), this protein is Geranylgeranyl pyrophosphate synthase dpmaD.